The chain runs to 498 residues: Probable deoxyguanosinetriphosphate triphosphohydrolase (498 aa).

The 192-residue stretch at 71-262 folds into the HD domain; sequence RLTHSLEVQQ…MEAADDISYC (192 aa).

It belongs to the dGTPase family. Type 1 subfamily. Mg(2+) serves as cofactor.

The enzyme catalyses dGTP + H2O = 2'-deoxyguanosine + triphosphate + H(+). Functionally, dGTPase preferentially hydrolyzes dGTP over the other canonical NTPs. The polypeptide is Probable deoxyguanosinetriphosphate triphosphohydrolase (Pseudomonas aeruginosa (strain ATCC 15692 / DSM 22644 / CIP 104116 / JCM 14847 / LMG 12228 / 1C / PRS 101 / PAO1)).